A 108-amino-acid chain; its full sequence is MEPRFLLFSLLFVVFLQPALVFNMVLGYILGYLIKKNYARLKVMFLTNTFEQPEEDDIHVSDEKNPFEGIDPDVSKHLKTLGLDTSLDGEDLEYLQRFWESMSNTKKK.

The helical transmembrane segment at 5-25 (FLLFSLLFVVFLQPALVFNMV) threads the bilayer.

Belongs to the nanovirus U4 protein family.

Its subcellular location is the membrane. The polypeptide is Protein U4 (DNA-U4) (Astragalus sinicus (Chinese milk vetch)).